The sequence spans 98 residues: Aspartyl/glutamyl-tRNA(Asn/Gln) amidotransferase subunit C (98 aa).

Residues 75-98 are disordered; the sequence is AQALSGAPAQEQQRFKVPQILGED.

This sequence belongs to the GatC family. Heterotrimer of A, B and C subunits.

The enzyme catalyses L-glutamyl-tRNA(Gln) + L-glutamine + ATP + H2O = L-glutaminyl-tRNA(Gln) + L-glutamate + ADP + phosphate + H(+). It catalyses the reaction L-aspartyl-tRNA(Asn) + L-glutamine + ATP + H2O = L-asparaginyl-tRNA(Asn) + L-glutamate + ADP + phosphate + 2 H(+). Its function is as follows. Allows the formation of correctly charged Asn-tRNA(Asn) or Gln-tRNA(Gln) through the transamidation of misacylated Asp-tRNA(Asn) or Glu-tRNA(Gln) in organisms which lack either or both of asparaginyl-tRNA or glutaminyl-tRNA synthetases. The reaction takes place in the presence of glutamine and ATP through an activated phospho-Asp-tRNA(Asn) or phospho-Glu-tRNA(Gln). In Streptomyces griseus subsp. griseus (strain JCM 4626 / CBS 651.72 / NBRC 13350 / KCC S-0626 / ISP 5235), this protein is Aspartyl/glutamyl-tRNA(Asn/Gln) amidotransferase subunit C.